The primary structure comprises 178 residues: MNPFHDLEPGPDVPEVVYAIIEIPKGSRNKYELDKKTGLLKLDRVLYSPFFYPVDYGIIPRTWYEDDDPFDIMVIMREPVYPLTIIEARPIGLFKMIDSGDKDYKVLAVPVEDPYFKDWKDIDDVPKAFLDEIAHFFKRYKELQGKEIIVEGWEGAEAAKREILRAIEMYKEKFGKKE.

Substrate contacts are provided by K30, R44, and Y56. Positions 66, 71, and 103 each coordinate Mg(2+). Y140 contributes to the substrate binding site.

It belongs to the PPase family. In terms of assembly, homohexamer. It depends on Mg(2+) as a cofactor.

The protein localises to the cytoplasm. The catalysed reaction is diphosphate + H2O = 2 phosphate + H(+). In terms of biological role, catalyzes the hydrolysis of inorganic pyrophosphate (PPi) forming two phosphate ions. The protein is Inorganic pyrophosphatase of Pyrococcus furiosus (strain ATCC 43587 / DSM 3638 / JCM 8422 / Vc1).